The following is a 194-amino-acid chain: Chromophore lyase CpcT/CpeT 1 (194 aa).

The protein belongs to the CpcT/CpeT biliprotein lyase family.

Covalently attaches a chromophore to Cys residue(s) of phycobiliproteins. In Microcystis aeruginosa (strain NIES-843 / IAM M-2473), this protein is Chromophore lyase CpcT/CpeT 1.